The chain runs to 427 residues: Diaminobutyrate--2-oxoglutarate transaminase (427 aa).

Lys-269 bears the N6-(pyridoxal phosphate)lysine mark.

Belongs to the class-III pyridoxal-phosphate-dependent aminotransferase family. Pyridoxal 5'-phosphate serves as cofactor.

It carries out the reaction L-2,4-diaminobutanoate + 2-oxoglutarate = L-aspartate 4-semialdehyde + L-glutamate. The protein operates within amine and polyamine biosynthesis; ectoine biosynthesis; L-ectoine from L-aspartate 4-semialdehyde: step 1/3. Functionally, catalyzes reversively the conversion of L-aspartate beta-semialdehyde (ASA) to L-2,4-diaminobutyrate (DABA) by transamination with L-glutamate. The sequence is that of Diaminobutyrate--2-oxoglutarate transaminase (ectB) from Halalkalibacterium halodurans (strain ATCC BAA-125 / DSM 18197 / FERM 7344 / JCM 9153 / C-125) (Bacillus halodurans).